Reading from the N-terminus, the 295-residue chain is Tyrosine recombinase XerD (295 aa).

Residues 1-85 (MNTIIEEYLN…TIRSFHQFAL (85 aa)) form the Core-binding (CB) domain. The region spanning 106–289 (KLPDVLEIDE…SKSQIRKMYT (184 aa)) is the Tyr recombinase domain. Catalysis depends on residues Arg-146, Lys-170, His-241, Arg-244, and His-267. Catalysis depends on Tyr-276, which acts as the O-(3'-phospho-DNA)-tyrosine intermediate.

It belongs to the 'phage' integrase family. XerD subfamily. In terms of assembly, forms a cyclic heterotetrameric complex composed of two molecules of XerC and two molecules of XerD.

Its subcellular location is the cytoplasm. In terms of biological role, site-specific tyrosine recombinase, which acts by catalyzing the cutting and rejoining of the recombining DNA molecules. The XerC-XerD complex is essential to convert dimers of the bacterial chromosome into monomers to permit their segregation at cell division. It also contributes to the segregational stability of plasmids. The polypeptide is Tyrosine recombinase XerD (Staphylococcus epidermidis (strain ATCC 12228 / FDA PCI 1200)).